The chain runs to 567 residues: MAEISRQAYADMFGPTTGDKVRLADTDLWIEVENDLTIYGEEVKFGGGKVIRDGMGQGQMTAQDCVDLVLTNALIVDHWGIVKADIGVKDGRIFAVGKAGNPDIQPGVTIPIGAATEVIAAEGKIVTAGGIDTHIHWICPQQAEEALVSGVTTMIGGGTGPAAGTNATTCTPGPWYIARMLQAADTLPVNIGLLGKGNGSNPDALREQIAAGAIGLKIHEDWGSTPATINCSLSVAEEMDIQVALHSDTLNEAGFVEDTLAAIDGRTIHTFHTEGAGGGHAPDIITACAHPNILPSSTNPTLPYTVNTIDEHLDMLMVCHHLDPDIAEDVAFAESRIRRETIAAEDVLHDIGAFSLTSSDSQAMGRVGEVIIRTWQVAHRMKVQRGALAEESGDNDNFRAKRYVAKYTINPALTHGIAHEVGSVEAGKLADLVVWSPAFFGVKPATIVKGGMIACAPMGDINASIPTPQPVHYRPMFGSLGAARHATRLTFISQAADANRIPQQLNLQSAIAVVKGCRTVKKADMIHNGLQPNITVDAQTYEVRIDGELITSEPADVLPMAQRYFLF.

Residues 129 to 567 (GGIDTHIHWI…LPMAQRYFLF (439 aa)) enclose the Urease domain. Ni(2+)-binding residues include His134, His136, and Lys217. Lys217 bears the N6-carboxylysine mark. His219 is a binding site for substrate. Positions 246 and 272 each coordinate Ni(2+). His320 functions as the Proton donor in the catalytic mechanism. Asp360 contributes to the Ni(2+) binding site.

Belongs to the metallo-dependent hydrolases superfamily. Urease alpha subunit family. As to quaternary structure, heterotrimer of UreA (gamma), UreB (beta) and UreC (alpha) subunits. Three heterotrimers associate to form the active enzyme. Ni cation is required as a cofactor. Post-translationally, carboxylation allows a single lysine to coordinate two nickel ions.

It is found in the cytoplasm. It catalyses the reaction urea + 2 H2O + H(+) = hydrogencarbonate + 2 NH4(+). It participates in nitrogen metabolism; urea degradation; CO(2) and NH(3) from urea (urease route): step 1/1. The protein is Urease subunit alpha of Enterobacter sp. (strain 638).